The sequence spans 211 residues: Stromal cell-derived factor 2 (211 aa).

Residues 1-18 (MAVVPLLLLGGLWSAVGA) form the signal peptide. MIR domains lie at 21–75 (LGVV…IRGK), 83–138 (GTPI…VLCN), and 139–193 (GPYW…AMEG).

The protein localises to the secreted. This Homo sapiens (Human) protein is Stromal cell-derived factor 2 (SDF2).